The chain runs to 500 residues: Probable 26S proteasome non-ATPase regulatory subunit 3 (500 aa).

Residues 253 to 432 (ARFLYYLGRI…GYMRTKESTD (180 aa)) enclose the PCI domain. The segment at 462-484 (RYPPKSYGKELESAEERREREQQ) is disordered. Over residues 468 to 484 (YGKELESAEERREREQQ) the composition is skewed to basic and acidic residues.

It belongs to the proteasome subunit S3 family. The 26S proteasome is composed of a core protease, known as the 20S proteasome, capped at one or both ends by the 19S regulatory complex (RC). The RC is composed of at least 18 different subunits in two subcomplexes, the base and the lid, which form the portions proximal and distal to the 20S proteolytic core, respectively.

Acts as a regulatory subunit of the 26 proteasome which is involved in the ATP-dependent degradation of ubiquitinated proteins. The sequence is that of Probable 26S proteasome non-ATPase regulatory subunit 3 (DOXA2) from Anopheles stephensi (Indo-Pakistan malaria mosquito).